Reading from the N-terminus, the 467-residue chain is uncharacterized protein (467 aa).

Residues 1–60 (MVRVSRGCQSCVDAKLQSTPSPSPSKSPSPTESPEQCLQKRQSGEQVVLPSRPFPRTSPR) form a disordered region.

In terms of biological role, involved in osmoadaptation. This is an uncharacterized protein from Emericella nidulans (strain FGSC A4 / ATCC 38163 / CBS 112.46 / NRRL 194 / M139) (Aspergillus nidulans).